The chain runs to 777 residues: DISP complex protein LRCH3 (777 aa).

LRR repeat units follow at residues 56 to 79 (AAVT…AANH), 81 to 104 (LTDT…ACHF), 105 to 127 (VSLE…ILNL), 128 to 150 (QALT…LCNL), 152 to 172 (LKVL…IGHL), 173 to 195 (RHLM…IGNL), 196 to 218 (EALR…LAEL), 220 to 239 (LIRL…CYRN), 240 to 264 (LRHL…CIKG), and 266 to 290 (VHIF…DRRP). The mediates interaction with DOCK7 stretch occupies residues 56–290 (AAVTGVLSLS…PDLPDYDRRP (235 aa)). Phosphoserine is present on residues S324, S415, and S419. Residues 382-648 (TAEEEEAEVR…DSTDSITGQN (267 aa)) form a mediates direct interaction with MYO6 region. The interval 568–590 (FTPLKSDDRPNALLSSPATETVH) is disordered. Residues S611 and S628 each carry the phosphoserine modification. The interval 621-653 (ETNKGHASPLPPSAAPTTDSTDSITGQNSRQRE) is disordered. Positions 635–645 (APTTDSTDSIT) are enriched in low complexity. Residues 652–765 (REEELELIDQ…VTVQALLELA (114 aa)) enclose the Calponin-homology (CH) domain.

Component of the DOCK7-induced septin displacement/DISP complex, at least composed of DOCK7, LRCH3 and MYO6.

Its subcellular location is the cytoplasm. Its function is as follows. As part of the DISP complex, may regulate the association of septins with actin and thereby regulate the actin cytoskeleton. This chain is DISP complex protein LRCH3, found in Homo sapiens (Human).